Reading from the N-terminus, the 144-residue chain is Ribonuclease H (144 aa).

The RNase H type-1 domain maps to 1 to 136 (MKIVTLFSDG…CDQMARNEAL (136 aa)). Mg(2+) contacts are provided by aspartate 9, glutamate 47, aspartate 69, and aspartate 128.

It belongs to the RNase H family. In terms of assembly, monomer. Mg(2+) serves as cofactor.

The protein resides in the cytoplasm. The catalysed reaction is Endonucleolytic cleavage to 5'-phosphomonoester.. In terms of biological role, endonuclease that specifically degrades the RNA of RNA-DNA hybrids. In Campylobacter concisus (strain 13826), this protein is Ribonuclease H.